The primary structure comprises 576 residues: Immunoglobulin mu heavy chain (576 aa).

Gln-1 is subject to Pyrrolidone carboxylic acid. 5 Ig-like domains span residues 1–97, 132–212, 236–334, 352–442, and 452–553; these read QVTL…TYYC, PTLF…EHVC, PKVS…QNAS, PSFA…QTIS, and PDVY…RTVD. Positions 1 to 124 are variable (V) domain, involved in antigen recognition; that stretch reads QVTLTESGPA…VWGKGTTVTV (124 aa). Disulfide bonds link Cys-22–Cys-97, Cys-153–Cys-212, and Cys-259–Cys-320. 2 N-linked (GlcNAc...) asparagine glycosylation sites follow: Asn-74 and Asn-170. Residues 125–576 form a constant (C) domain region; sequence SSGSASAPTL…VMSDTAGTCY (452 aa). N-linked (GlcNAc...) asparagine glycosylation is found at Asn-332, Asn-395, and Asn-402. 2 disulfides stabilise this stretch: Cys-367–Cys-426 and Cys-474–Cys-536. N-linked (GlcNAc...) asparagine glycosylation occurs at Asn-563.

In terms of assembly, immunoglobulins are composed of two identical heavy chains and two identical light chains; disulfide-linked. It is found almost exclusively as a homopentamer in the serum. Membrane-bound IgM molecules are non-covalently associated with heterodimer of CD79A and CD79B.

It is found in the secreted. Its subcellular location is the cell membrane. Immunoglobulins, also known as antibodies, are membrane-bound or secreted glycoproteins produced by B lymphocytes. In the recognition phase of humoral immunity, the membrane-bound immunoglobulins serve as receptors which, upon binding of a specific antigen, trigger the clonal expansion and differentiation of B lymphocytes into immunoglobulins-secreting plasma cells. Secreted immunoglobulins mediate the effector phase of humoral immunity, which results in the elimination of bound antigens. The antigen binding site is formed by the variable domain of one heavy chain, together with that of its associated light chain. Thus, each immunoglobulin has two antigen binding sites with remarkable affinity for a particular antigen. The variable domains are assembled by a process called V-(D)-J rearrangement and can then be subjected to somatic hypermutations which, after exposure to antigen and selection, allow affinity maturation for a particular antigen. IgM antibodies play an important role in primary defense mechanisms. They have been shown to be involved in early recognition of external invaders like bacteria and viruses, cellular waste and modified self, as well as in recognition and elimination of precancerous and cancerous lesions. The membrane-bound form is found in the majority of normal B cells alongside with IgD. Membrane-bound IgM induces the phosphorylation of CD79A and CD79B by the Src family of protein tyrosine kinases. It may cause death of cells by apoptosis. It is also found in soluble form, which represents about 30% of the total serum immunoglobulins where it is found almost exclusively as a homopentamer. After the antigen binds to the B cell receptor, the secreted form is secreted in large amounts (, PubMed:16895553). This Homo sapiens (Human) protein is Immunoglobulin mu heavy chain.